An 87-amino-acid polypeptide reads, in one-letter code: Small ribosomal subunit protein uS15c (87 aa).

A disordered region spans residues 1-20 (MNQNLSIRKRNKLKQDSGSP).

It belongs to the universal ribosomal protein uS15 family. In terms of assembly, part of the 30S ribosomal subunit.

Its subcellular location is the plastid. It is found in the chloroplast. This Zygnema circumcarinatum (Green alga) protein is Small ribosomal subunit protein uS15c (rps15).